Here is a 491-residue protein sequence, read N- to C-terminus: LETM1 domain-containing protein LETM2, mitochondrial (491 aa).

Residues 1 to 25 (MAFYSYNSVLAIARTRFPSHFVHPT) constitute a mitochondrion transit peptide. Residues 26 to 177 (CSSYSPSCAF…LLRTCVDFFR (152 aa)) lie on the Mitochondrial intermembrane side of the membrane. A compositionally biased stretch (polar residues) spans 94-109 (EQATKHPQVTSPQATK). The tract at residues 94–115 (EQATKHPQVTSPQATKETGMEI) is disordered. A helical membrane pass occupies residues 178–198 (LVPFMVFLIVPFMEFLLPVFL). Topologically, residues 199–491 (KLFPEMLPST…QNSKASSKGA (293 aa)) are mitochondrial matrix. Residues 208-235 (TFESESKKEEKQKKKMAVKLELAKFLQE) are a coiled coil. Residues 221-438 (KKMAVKLELA…LAPQLKGTKD (218 aa)) form the Letm1 RBD domain. A disordered region spans residues 435 to 491 (GTKDEDFIQPPPVTSSPITPSTPISLPKGPITSSEEPTLQAKSQMTAQNSKASSKGA). The segment covering 449–461 (SSPITPSTPISLP) has biased composition (low complexity). Positions 465–491 (ITSSEEPTLQAKSQMTAQNSKASSKGA) are enriched in polar residues.

It localises to the mitochondrion inner membrane. The chain is LETM1 domain-containing protein LETM2, mitochondrial (LETM2) from Homo sapiens (Human).